Reading from the N-terminus, the 257-residue chain is Tryptophan synthase alpha chain (257 aa).

Residues Glu44 and Asp55 each act as proton acceptor in the active site.

This sequence belongs to the TrpA family. As to quaternary structure, tetramer of two alpha and two beta chains.

It carries out the reaction (1S,2R)-1-C-(indol-3-yl)glycerol 3-phosphate + L-serine = D-glyceraldehyde 3-phosphate + L-tryptophan + H2O. Its pathway is amino-acid biosynthesis; L-tryptophan biosynthesis; L-tryptophan from chorismate: step 5/5. The alpha subunit is responsible for the aldol cleavage of indoleglycerol phosphate to indole and glyceraldehyde 3-phosphate. The polypeptide is Tryptophan synthase alpha chain (Chlamydia caviae (strain ATCC VR-813 / DSM 19441 / 03DC25 / GPIC) (Chlamydophila caviae)).